An 81-amino-acid polypeptide reads, in one-letter code: RBAK downstream neighbor protein (81 aa).

Positions 1–22 (MWPPLLLLLLLLPAAPVPTAKA) are cleaved as a signal peptide.

It localises to the secreted. The protein is RBAK downstream neighbor protein (RBAKDN) of Homo sapiens (Human).